Here is a 533-residue protein sequence, read N- to C-terminus: DNA-directed RNA polymerase III subunit RPC3 (533 aa).

Residues 161–183 (PLVPDTDSSDPGPPPPAPNLVIN) form a disordered region. S194 is subject to Phosphoserine. The disordered stretch occupies residues 197 to 228 (GKGKRRRSSDEDAAGEPKAKKPRCTDNEEPTP). Residues 211–222 (GEPKAKKPRCTD) are compositionally biased toward basic and acidic residues.

This sequence belongs to the eukaryotic RPC3/POLR3C RNA polymerase subunit family. In terms of assembly, component of the RNA polymerase III complex consisting of 17 subunits: a ten-subunit horseshoe-shaped catalytic core composed of POLR3A/RPC1, POLR3B/RPC2, POLR1C/RPAC1, POLR1D/RPAC2, POLR3K/RPC10, POLR2E/RPABC1, POLR2F/RPABC2, POLR2H/RPABC3, POLR2K/RPABC4 and POLR2L/RPABC5; a mobile stalk composed of two subunits POLR3H/RPC8 and CRCP/RPC9, protruding from the core and functioning primarily in transcription initiation; and additional subunits homologous to general transcription factors of the RNA polymerase II machinery, POLR3C/RPC3-POLR3F/RPC6-POLR3G/RPC7 heterotrimer required for transcription initiation and POLR3D/RPC4-POLR3E/RPC5 heterodimer involved in both transcription initiation and termination. Directly interacts with POLR3G/RPC7 and POLR3GL. Directly interacts with POLR3F/RPC6. Interacts with GTF3C4. As part of the RNA polymerase III complex, interacts with PKP2.

The protein resides in the nucleus. In terms of biological role, DNA-dependent RNA polymerase catalyzes the transcription of DNA into RNA using the four ribonucleoside triphosphates as substrates. Specific peripheric component of RNA polymerase III (Pol III) which synthesizes small non-coding RNAs including 5S rRNA, snRNAs, tRNAs and miRNAs from at least 500 distinct genomic loci. Part of POLR3C/RPC3-POLR3F/RPC6-POLR3G/RPC7 heterotrimer, coordinates the dynamics of Pol III stalk and clamp modules during the transition from apo to elongation state. Pol III plays a key role in sensing and limiting infection by intracellular bacteria and DNA viruses. Acts as a nuclear and cytosolic DNA sensor involved in innate immune response. Can sense non-self dsDNA that serves as template for transcription into dsRNA. The non-self RNA polymerase III transcripts, such as Epstein-Barr virus-encoded RNAs (EBERs) induce type I interferon and NF-kappa-B through the RIG-I pathway. Preferentially binds single-stranded DNA (ssDNA) in a sequence-independent manner. The chain is DNA-directed RNA polymerase III subunit RPC3 from Rattus norvegicus (Rat).